The primary structure comprises 556 residues: Potassium-transporting ATPase potassium-binding subunit (556 aa).

12 helical membrane-spanning segments follow: residues 3–23 (AHGV…TPIL), 57–77 (AAYA…LYAL), 129–149 (GLTV…VALM), 172–192 (LGLL…QGVP), 247–267 (LVNL…TNTF), 278–298 (WALL…AWWA), 319–339 (LGVA…CGAV), 346–366 (LLPL…VVVG), 371–391 (GLYG…LMVG), 408–428 (LAVI…GLAI), 486–506 (FVVM…MAVP), and 516–536 (GWLF…LTYF).

The protein belongs to the KdpA family. As to quaternary structure, the system is composed of three essential subunits: KdpA, KdpB and KdpC.

It is found in the cell inner membrane. Its function is as follows. Part of the high-affinity ATP-driven potassium transport (or Kdp) system, which catalyzes the hydrolysis of ATP coupled with the electrogenic transport of potassium into the cytoplasm. This subunit binds the periplasmic potassium ions and delivers the ions to the membrane domain of KdpB through an intramembrane tunnel. The chain is Potassium-transporting ATPase potassium-binding subunit from Paramagnetospirillum magneticum (strain ATCC 700264 / AMB-1) (Magnetospirillum magneticum).